A 122-amino-acid polypeptide reads, in one-letter code: Large ribosomal subunit protein uL14c (122 aa).

Belongs to the universal ribosomal protein uL14 family. Part of the 50S ribosomal subunit.

The protein localises to the plastid. It localises to the chloroplast. Functionally, binds to 23S rRNA. The polypeptide is Large ribosomal subunit protein uL14c (Chlorokybus atmophyticus (Soil alga)).